The primary structure comprises 282 residues: Shikimate dehydrogenase (NADP(+)) (282 aa).

Residues 19-21 (SFS) and Thr-66 each bind shikimate. Residue Lys-70 is the Proton acceptor of the active site. Residues Asn-91 and Asp-106 each coordinate shikimate. Residues 130-134 (GAGGA), 152-157 (NRTVEK), Thr-196, Met-200, and Leu-224 contribute to the NADP(+) site. Tyr-226 contacts shikimate. NADP(+) is bound at residue Gly-247.

The protein belongs to the shikimate dehydrogenase family. Homodimer.

It catalyses the reaction shikimate + NADP(+) = 3-dehydroshikimate + NADPH + H(+). Its pathway is metabolic intermediate biosynthesis; chorismate biosynthesis; chorismate from D-erythrose 4-phosphate and phosphoenolpyruvate: step 4/7. In terms of biological role, involved in the biosynthesis of the chorismate, which leads to the biosynthesis of aromatic amino acids. Catalyzes the reversible NADPH linked reduction of 3-dehydroshikimate (DHSA) to yield shikimate (SA). The chain is Shikimate dehydrogenase (NADP(+)) from Methanocaldococcus jannaschii (strain ATCC 43067 / DSM 2661 / JAL-1 / JCM 10045 / NBRC 100440) (Methanococcus jannaschii).